The chain runs to 97 residues: UstYa family oxidase VicYc (97 aa).

2 short sequence motifs (HXXHC) span residues 11–15 (HELHC) and 38–42 (HANHC).

It belongs to the ustYa family.

It participates in mycotoxin biosynthesis. In terms of biological role, ustYa family oxidase, part of the gene cluster that mediates the biosynthesis of the secondary metabolite victorin, the molecular basis for Victoria blight of oats. The role of vicYc within the pathway has still to be determined. The pathway starts with the processing of the precursor vicA1 by several endopeptidases including kexin proteases as well as the cluster-specific S28 family peptidases vicPa and vicPb to produce 7 identical copies of the hexapeptide Gly-Leu-Lys-Leu-Ala-Phe. After being excised from the precursor peptide, the core peptides are cyclized and modified post-translationally by enzymes encoded within the gene cluster. The ustYa family oxidase vicYb is required for the formation of the macrocycle in victorin and the copper amine oxidases (CAOs) vicK1 and vicK2 are responsible for converting victorin to the active form by oxidizing the N-terminal glycyl residue in the peptides to glyoxylate. Relaxed substrate specificity of enzymes in the victorin biosynthetic pathway results in a metabolic grid that produces a set of analogs including victorinines B, C, E or HV-toxin M. This Bipolaris victoriae (strain FI3) (Victoria blight of oats agent) protein is UstYa family oxidase VicYc.